A 575-amino-acid polypeptide reads, in one-letter code: Membrane protein insertase YidC (575 aa).

A run of 6 helical transmembrane segments spans residues 6–26 (VFLI…WGKD), 357–377 (FSIM…LHSF), 381–401 (WGWA…PLSA), 448–468 (GGCL…WVLV), 490–510 (PYFI…KLTP), and 526–546 (PLVF…YWVV).

This sequence belongs to the OXA1/ALB3/YidC family. Type 1 subfamily. As to quaternary structure, interacts with the Sec translocase complex via SecD. Specifically interacts with transmembrane segments of nascent integral membrane proteins during membrane integration.

The protein localises to the cell inner membrane. Its function is as follows. Required for the insertion and/or proper folding and/or complex formation of integral membrane proteins into the membrane. Involved in integration of membrane proteins that insert both dependently and independently of the Sec translocase complex, as well as at least some lipoproteins. Aids folding of multispanning membrane proteins. The polypeptide is Membrane protein insertase YidC (Xanthomonas campestris pv. campestris (strain B100)).